The primary structure comprises 161 residues: Ribonuclease H (161 aa).

The RNase H type-1 domain occupies 3 to 144 (VLKQLSIFTD…CDTLARVAAE (142 aa)). Residues Asp-12, Glu-50, Asp-72, and Asp-136 each coordinate Mg(2+).

Belongs to the RNase H family. Monomer. Requires Mg(2+) as cofactor.

The protein localises to the cytoplasm. The enzyme catalyses Endonucleolytic cleavage to 5'-phosphomonoester.. Its function is as follows. Endonuclease that specifically degrades the RNA of RNA-DNA hybrids. The polypeptide is Ribonuclease H (Shewanella woodyi (strain ATCC 51908 / MS32)).